An 88-amino-acid polypeptide reads, in one-letter code: Co-chaperonin GroES (88 aa).

The protein belongs to the GroES chaperonin family. In terms of assembly, heptamer of 7 subunits arranged in a ring. Interacts with the chaperonin GroEL.

Its subcellular location is the cytoplasm. Together with the chaperonin GroEL, plays an essential role in assisting protein folding. The GroEL-GroES system forms a nano-cage that allows encapsulation of the non-native substrate proteins and provides a physical environment optimized to promote and accelerate protein folding. GroES binds to the apical surface of the GroEL ring, thereby capping the opening of the GroEL channel. In Treponema pallidum (strain Nichols), this protein is Co-chaperonin GroES.